Consider the following 261-residue polypeptide: Taurine import ATP-binding protein TauB (261 aa).

The ABC transporter domain occupies 4–233 (LTADRVSVRY…RWRAGDSARA (230 aa)). 38-45 (GPSGCGKT) lines the ATP pocket.

This sequence belongs to the ABC transporter superfamily. Taurine importer (TC 3.A.1.17.1) family. As to quaternary structure, the complex is composed of two ATP-binding proteins (TauB), two transmembrane proteins (TauC) and a solute-binding protein (TauA).

Its subcellular location is the cell inner membrane. The enzyme catalyses taurine(out) + ATP + H2O = taurine(in) + ADP + phosphate + H(+). Functionally, part of the ABC transporter complex TauABC involved in taurine import. Responsible for energy coupling to the transport system. The sequence is that of Taurine import ATP-binding protein TauB from Chromobacterium violaceum (strain ATCC 12472 / DSM 30191 / JCM 1249 / CCUG 213 / NBRC 12614 / NCIMB 9131 / NCTC 9757 / MK).